The primary structure comprises 735 residues: Post-transcriptional regulator MKT1 (735 aa).

The segment at 475-722 is interaction with PBP1; that stretch reads QVIYNTMEET…ANERMKRAQK (248 aa).

Belongs to the XPG/RAD2 endonuclease family. As to quaternary structure, forms a complex composed of at least MKT1, PBP1, XAC1 and LSM12. Within the complex, interacts (via C-terminus) with PBP1; the interaction is direct. Interacts with RNA-binding protein ZC3H11 (via MKT1-binding motif); the interaction is direct. May interact with RNA-binding proteins CFB1 and CFB2. Interacts with the EIF4E6-EIF4G5 translation initiation complex via EIF4G5; the interaction with EIF4G5 is direct.

It localises to the cytoplasm. Its subcellular location is the cytosol. The protein resides in the stress granule. Its function is as follows. Involved in post-transcriptional regulation of gene expression. Promotes mRNA stabilization by recruiting a complex containing PBP1, LSM12 and XAC1 to mRNAs. Recruited to mRNAs by sequence-specific RNA binding proteins. May regulate translation through interactions with the EIF4E6-EIF4G5 translation initiation complex. The sequence is that of Post-transcriptional regulator MKT1 from Trypanosoma brucei brucei (strain 927/4 GUTat10.1).